A 379-amino-acid chain; its full sequence is 3-dehydroquinate synthase (379 aa).

Residues 67–72 (SGEKNK), 101–105 (GVVLD), 125–126 (TT), Lys-138, and Lys-147 each bind NAD(+). The Zn(2+) site is built by Glu-180, His-242, and His-258.

Belongs to the sugar phosphate cyclases superfamily. Dehydroquinate synthase family. It depends on NAD(+) as a cofactor. Co(2+) serves as cofactor. Requires Zn(2+) as cofactor.

The protein resides in the cytoplasm. The enzyme catalyses 7-phospho-2-dehydro-3-deoxy-D-arabino-heptonate = 3-dehydroquinate + phosphate. It functions in the pathway metabolic intermediate biosynthesis; chorismate biosynthesis; chorismate from D-erythrose 4-phosphate and phosphoenolpyruvate: step 2/7. Catalyzes the conversion of 3-deoxy-D-arabino-heptulosonate 7-phosphate (DAHP) to dehydroquinate (DHQ). The polypeptide is 3-dehydroquinate synthase (Chlamydia abortus (strain DSM 27085 / S26/3) (Chlamydophila abortus)).